We begin with the raw amino-acid sequence, 934 residues long: Rab GTPase-activating protein tbc-11 (934 aa).

The PID domain maps to 16 to 134 (VQYLGCSQLV…SKAETAAKAL (119 aa)). The interval 337–383 (FISLESDSDRKRSKQNLGKSPSRMPTQLLHPTGDDESDCDEPLLSGS) is disordered. The segment covering 351-361 (QNLGKSPSRMP) has biased composition (polar residues). In terms of domain architecture, Rab-GAP TBC spans 422–612 (GIPDKLRGRV…FILDLFLSQG (191 aa)). Coiled coils occupy residues 727–800 (KIEL…YKKL) and 861–895 (LEER…LTHQ).

Rab GTPase activating protein for the small GTPases rab-6.1 and rab-6.2. Probably acts through rab-6.1 and rab-6.2 to play a role in microRNA-mediated gene silencing in different tissue types. Required for seam cell division and alae formation. This Caenorhabditis elegans protein is Rab GTPase-activating protein tbc-11.